The chain runs to 471 residues: 3-isopropylmalate dehydratase large subunit (471 aa).

The [4Fe-4S] cluster site is built by Cys347, Cys407, and Cys410.

It belongs to the aconitase/IPM isomerase family. LeuC type 1 subfamily. As to quaternary structure, heterodimer of LeuC and LeuD. It depends on [4Fe-4S] cluster as a cofactor.

It catalyses the reaction (2R,3S)-3-isopropylmalate = (2S)-2-isopropylmalate. It participates in amino-acid biosynthesis; L-leucine biosynthesis; L-leucine from 3-methyl-2-oxobutanoate: step 2/4. In terms of biological role, catalyzes the isomerization between 2-isopropylmalate and 3-isopropylmalate, via the formation of 2-isopropylmaleate. The protein is 3-isopropylmalate dehydratase large subunit of Geobacillus sp. (strain WCH70).